The following is a 559-amino-acid chain: NXPE family member 3 (559 aa).

The signal sequence occupies residues 1 to 30 (MWTNFFKLRLFCCLLAVLMVVVLVVNVTQV). Residues Asn-26, Asn-237, and Asn-346 are each glycosylated (N-linked (GlcNAc...) asparagine).

It belongs to the NXPE family.

The protein localises to the secreted. This Pongo abelii (Sumatran orangutan) protein is NXPE family member 3 (NXPE3).